The chain runs to 408 residues: Putative UPF0496 protein 2 (408 aa).

The next 2 helical transmembrane spans lie at 224–244 (RIAR…AIVA) and 252–272 (ALVG…GAAR). Positions 385–408 (MARGLPPPSPATVTTTSEERLTSS) are disordered.

It belongs to the UPF0496 family.

The protein localises to the membrane. This chain is Putative UPF0496 protein 2, found in Oryza sativa subsp. indica (Rice).